Here is a 57-residue protein sequence, read N- to C-terminus: MAVPFRRTSKTRKNKRRTHFKLEVPGMVECPECGEYKLSHRVCKACGTYKGEKVASK.

It belongs to the bacterial ribosomal protein bL32 family.

In Shouchella clausii (strain KSM-K16) (Alkalihalobacillus clausii), this protein is Large ribosomal subunit protein bL32.